A 330-amino-acid polypeptide reads, in one-letter code: Lymphocyte-specific protein 1 (330 aa).

Basic and acidic residues-rich tracts occupy residues 1-20 (MAEAAIDPRCEEQEELHAED) and 37-62 (AREQRQRERERQLQDQDKDKEDDGGH). 2 disordered regions span residues 1–246 (MAEA…SIEL) and 281–302 (DMSKKSLWEQKGGSKISSTIKS). The span at 66 to 77 (QPGQQTLISLKS) shows a compositional bias: polar residues. 2 positions are modified to phosphoserine; by CK2: serine 77 and serine 78. Residues 113–135 (QSERPEEKQTEESSHQAKVHLEE) show a composition bias toward basic and acidic residues. Threonine 166 carries the post-translational modification Phosphothreonine. Residues serine 168, serine 179, serine 180, and serine 184 each carry the phosphoserine modification. Composition is skewed to polar residues over residues 206 to 215 (VKKSQPTLPI) and 223 to 242 (QQYTQATESSGRTPKLSRQP). The residue at position 243 (serine 243) is a Phosphoserine; by MAPKAPK2. Low complexity predominate over residues 291–302 (KGGSKISSTIKS). Residue lysine 318 is modified to N6-acetyllysine.

Post-translationally, phosphorylated by casein kinase II, protein kinase C and MAPKAPK2. Phosphorylation by PKC induces translocation from membrane to cytoplasm. Phosphorylation by MAPKAPK2 may regulate neutrophil chemotaxis. Isoform 1 is expressed in normal mouse B and T-lymphocytes and in transformed B-cells but not (or in smaller amounts) in nine T-lymphoma lines tested. Isoform 2 is expressed in non-lymphoid cell lines (myocytes, stromal cells, fibroblasts).

Its subcellular location is the cell membrane. In terms of biological role, may play a role in mediating neutrophil activation and chemotaxis. This Mus musculus (Mouse) protein is Lymphocyte-specific protein 1 (Lsp1).